Reading from the N-terminus, the 262-residue chain is Ribosomal RNA small subunit methyltransferase A (262 aa).

Residues His19, Leu21, Gly44, Glu65, Asp90, and Asn109 each coordinate S-adenosyl-L-methionine. The interval 218–246 (LPNNLPGPLRERAEEALAGLGHGPDARAE) is disordered.

Belongs to the class I-like SAM-binding methyltransferase superfamily. rRNA adenine N(6)-methyltransferase family. RsmA subfamily.

It is found in the cytoplasm. The catalysed reaction is adenosine(1518)/adenosine(1519) in 16S rRNA + 4 S-adenosyl-L-methionine = N(6)-dimethyladenosine(1518)/N(6)-dimethyladenosine(1519) in 16S rRNA + 4 S-adenosyl-L-homocysteine + 4 H(+). In terms of biological role, specifically dimethylates two adjacent adenosines (A1518 and A1519) in the loop of a conserved hairpin near the 3'-end of 16S rRNA in the 30S particle. May play a critical role in biogenesis of 30S subunits. The polypeptide is Ribosomal RNA small subunit methyltransferase A (Rubrobacter xylanophilus (strain DSM 9941 / JCM 11954 / NBRC 16129 / PRD-1)).